Consider the following 408-residue polypeptide: LL-diaminopimelate aminotransferase (408 aa).

2 residues coordinate substrate: Tyr-15 and Gly-42. Pyridoxal 5'-phosphate contacts are provided by residues Tyr-72, 108–109 (SK), Tyr-132, Asn-187, Tyr-218, and 246–248 (SFS). The substrate site is built by Lys-109, Tyr-132, and Asn-187. An N6-(pyridoxal phosphate)lysine modification is found at Lys-249. The pyridoxal 5'-phosphate site is built by Arg-257 and Asn-292. Substrate is bound by residues Asn-292 and Arg-388.

This sequence belongs to the class-I pyridoxal-phosphate-dependent aminotransferase family. LL-diaminopimelate aminotransferase subfamily. Homodimer. Requires pyridoxal 5'-phosphate as cofactor.

It carries out the reaction (2S,6S)-2,6-diaminopimelate + 2-oxoglutarate = (S)-2,3,4,5-tetrahydrodipicolinate + L-glutamate + H2O + H(+). It functions in the pathway amino-acid biosynthesis; L-lysine biosynthesis via DAP pathway; LL-2,6-diaminopimelate from (S)-tetrahydrodipicolinate (aminotransferase route): step 1/1. In terms of biological role, involved in the synthesis of meso-diaminopimelate (m-DAP or DL-DAP), required for both lysine and peptidoglycan biosynthesis. Catalyzes the direct conversion of tetrahydrodipicolinate to LL-diaminopimelate. This is LL-diaminopimelate aminotransferase from Synechococcus sp. (strain CC9311).